A 241-amino-acid chain; its full sequence is Chloride intracellular channel protein 1 (241 aa).

Residue alanine 2 is modified to N-acetylalanine. The tract at residues 2–90 (AEEQPQVELF…EEFLEAVLCP (89 aa)) is required for insertion into the membrane. Lysine 13 bears the N6-acetyllysine mark. Cysteine 24 is a glutathione binding site. Cysteine 24 carries the post-translational modification S-glutathionyl cysteine; alternate. The short motif at 24 to 27 (CPFS) is the G-site element. Cysteine 24 and cysteine 59 form a disulfide bridge. A helical membrane pass occupies residues 26–46 (FSQRLFMVLWLKGVTFNVTTV). Leucine 64 and threonine 77 together coordinate glutathione. Positions 93–233 (YPKLAALNPE…PDDEEIELAY (141 aa)) constitute a GST C-terminal domain. Lysine 119 carries the N6-acetyllysine modification. Serine 121 is modified (phosphoserine). Lysine 131 carries the post-translational modification N6-acetyllysine. Phosphoserine is present on residues serine 156 and serine 211. Residue tyrosine 233 is modified to Phosphotyrosine.

It belongs to the chloride channel CLIC family. In terms of assembly, monomer. Homodimer (in vitro). Interacts with TRAPPC2. Dimerization requires a conformation change that leads to the exposure of a large hydrophobic surface. In vivo, this may lead to membrane insertion. Interacts with AKAP9. Hydrogen peroxide treatment causes a conformation change, leading to dimerization and formation of an intramolecular disulfide bond between Cys-24 and Cys-59. As to expression, expression is prominent in heart, placenta, liver, kidney and pancreas.

It localises to the nucleus. It is found in the nucleus membrane. Its subcellular location is the cytoplasm. The protein resides in the cell membrane. The protein localises to the endoplasmic reticulum. It catalyses the reaction L-dehydroascorbate + 2 glutathione = glutathione disulfide + L-ascorbate. The enzyme catalyses chloride(in) = chloride(out). It carries out the reaction iodide(out) = iodide(in). The catalysed reaction is thiocyanate(in) = thiocyanate(out). It catalyses the reaction nitrate(in) = nitrate(out). The enzyme catalyses bromide(in) = bromide(out). It carries out the reaction fluoride(in) = fluoride(out). With respect to regulation, the oxidoreductase activity is inhibited by rapamycin, amphotericin B and IAA-94. The channel conductance is regulated by pH and redox membrane potential. Inhibited by IAA-94. In the soluble state, catalyzes glutaredoxin-like thiol disulfide exchange reactions with reduced glutathione as electron donor. Reduces selenite and dehydroascorbate and may act as an antioxidant during oxidative stress response. Can insert into membranes and form voltage-dependent multi-ion conductive channels. Membrane insertion seems to be redox-regulated and may occur only under oxidizing conditions. Involved in regulation of the cell cycle. This chain is Chloride intracellular channel protein 1, found in Homo sapiens (Human).